The following is a 182-amino-acid chain: Flightin (182 aa).

Over residues 1–15 (MADEEDPWGFDDGGE) the composition is skewed to acidic residues. The tract at residues 1-76 (MADEEDPWGF…PPPPEDDGYR (76 aa)) is disordered.

Post-translationally, several forms of flightin are thought to be produced through post-translational modifications, possibly by phosphorylation. Found only in indirect flight muscles (IFM).

In terms of biological role, possibly involved in the regulation of flight muscles contraction, possibly by modulating actin-myosin interaction. This Drosophila melanogaster (Fruit fly) protein is Flightin (fln).